We begin with the raw amino-acid sequence, 447 residues long: Hemopexin (447 aa).

The N-terminal stretch at 1 to 18 (MRLIQALSLCLALSLSLA) is a signal peptide. The tract at residues 20–44 (PPQHKEDHSHKGKPGGEGHKHELHH) is disordered. The segment covering 22-44 (QHKEDHSHKGKPGGEGHKHELHH) has biased composition (basic and acidic residues). 8 Hemopexin repeats span residues 53–93 (GIEF…FPEL), 99–151 (LGHV…FPGI), 152–197 (PDHL…FKSM), 198–243 (PNCT…FMRC), 262–304 (RVHL…FKEL), 305–351 (HSEV…VLGI), 352–395 (EGPV…TITQ), and 396–441 (FKRI…VSQQ). A glycan (N-linked (GlcNAc...) asparagine) is linked at N87. Residues N168 and N199 are each glycosylated (N-linked (GlcNAc...) asparagine). H293 is a heme binding site.

It belongs to the hemopexin family.

The protein resides in the secreted. In terms of biological role, binds heme and transports it to the liver for breakdown and iron recovery, after which the free hemopexin returns to the circulation. The protein is Hemopexin of Danio rerio (Zebrafish).